A 343-amino-acid chain; its full sequence is Olfactory receptor 1E3 (343 aa).

Residues 1 to 28 are Extracellular-facing; that stretch reads MMKKNQTMISEFLLLGLPIQPEQQNLFY. An N-linked (GlcNAc...) asparagine glycan is attached at N5. Residues 29–49 form a helical membrane-spanning segment; that stretch reads ALFLAVYLTTLLGNLLVIVLI. Residues 50–107 lie on the Cytoplasmic side of the membrane; that stretch reads RLDSHLHMPMYLCLSNLSFSDLCFSSVTMPKLLQNMQSQNPSIPFADCLAQMYFHLFY. C97 and C179 are joined by a disulfide. Residues 108–128 form a helical membrane-spanning segment; it reads GVLESFLLVVMAYHCYVAICF. Residues 129–141 are Extracellular-facing; it reads PLHYTTIMSPKCC. The helical transmembrane segment at 142–162 threads the bilayer; the sequence is LGLLTLSWLLTTAHATLHTLL. The Cytoplasmic segment spans residues 163–195; that stretch reads MARLSFCAENVIPHFFCDTSTLLKLACSNTQVN. The helical transmembrane segment at 196 to 216 threads the bilayer; the sequence is GWVMFFMGGLILVIPFLLLIM. Topologically, residues 217 to 242 are extracellular; it reads SCARIVSTILRVPSTGGIQKAFSTCG. A helical transmembrane segment spans residues 243-263; it reads PHLSVVSLFYGTIIGLYLCPL. Over 264–271 the chain is Cytoplasmic; sequence TNHNTVKD. Residues 272–292 traverse the membrane as a helical segment; that stretch reads TVMAVMYTGVTHMLNPFIYSL. The Extracellular segment spans residues 293–310; it reads RNRDMRGNPGQSLQHKEN. A helical membrane pass occupies residues 311–331; sequence FFVFKIVIVGILPLLNLVGVV. The Cytoplasmic portion of the chain corresponds to 332-343; the sequence is KLIMKYHSKSVA.

Belongs to the G-protein coupled receptor 1 family.

It localises to the cell membrane. In terms of biological role, odorant receptor. This Homo sapiens (Human) protein is Olfactory receptor 1E3 (OR1E3).